Consider the following 569-residue polypeptide: Adenine deaminase (569 aa).

This sequence belongs to the metallo-dependent hydrolases superfamily. Adenine deaminase family. It depends on Mn(2+) as a cofactor.

It carries out the reaction adenine + H2O + H(+) = hypoxanthine + NH4(+). The sequence is that of Adenine deaminase from Desulfatibacillum aliphaticivorans.